We begin with the raw amino-acid sequence, 122 residues long: Large ribosomal subunit protein uL14c (122 aa).

Belongs to the universal ribosomal protein uL14 family. As to quaternary structure, part of the 50S ribosomal subunit.

It is found in the plastid. The protein resides in the chloroplast. Binds to 23S rRNA. This Vitis vinifera (Grape) protein is Large ribosomal subunit protein uL14c.